We begin with the raw amino-acid sequence, 418 residues long: LL-diaminopimelate aminotransferase (418 aa).

Tyrosine 25 and glycine 52 together coordinate substrate. Residues tyrosine 78, 115–116 (SK), tyrosine 140, asparagine 190, tyrosine 221, and 248–250 (SFS) each bind pyridoxal 5'-phosphate. Positions 116, 140, and 190 each coordinate substrate. N6-(pyridoxal phosphate)lysine is present on lysine 251. Arginine 259 lines the pyridoxal 5'-phosphate pocket.

The protein belongs to the class-I pyridoxal-phosphate-dependent aminotransferase family. In terms of assembly, homodimer. Requires pyridoxal 5'-phosphate as cofactor.

It is found in the cytoplasm. The catalysed reaction is (2S,6S)-2,6-diaminopimelate + 2-oxoglutarate = (S)-2,3,4,5-tetrahydrodipicolinate + L-glutamate + H2O + H(+). It participates in amino-acid biosynthesis; L-lysine biosynthesis via DAP pathway; LL-2,6-diaminopimelate from (S)-tetrahydrodipicolinate (aminotransferase route): step 1/1. In terms of biological role, involved in the synthesis of meso-diaminopimelate (m-DAP or DL-DAP), required for both lysine and peptidoglycan biosynthesis. Catalyzes the direct conversion of tetrahydrodipicolinate to LL-diaminopimelate, a reaction that requires three enzymes in E.coli. This Methanocaldococcus jannaschii (strain ATCC 43067 / DSM 2661 / JAL-1 / JCM 10045 / NBRC 100440) (Methanococcus jannaschii) protein is LL-diaminopimelate aminotransferase (dapL).